Consider the following 375-residue polypeptide: 23S rRNA (uracil(747)-C(5))-methyltransferase RlmC (375 aa).

The [4Fe-4S] cluster site is built by Cys3, Cys11, Cys14, and Cys87. S-adenosyl-L-methionine contacts are provided by Gln212, Phe241, Glu262, and Asn307. The active-site Nucleophile is Cys334.

Belongs to the class I-like SAM-binding methyltransferase superfamily. RNA M5U methyltransferase family. RlmC subfamily.

It catalyses the reaction uridine(747) in 23S rRNA + S-adenosyl-L-methionine = 5-methyluridine(747) in 23S rRNA + S-adenosyl-L-homocysteine + H(+). Its function is as follows. Catalyzes the formation of 5-methyl-uridine at position 747 (m5U747) in 23S rRNA. The chain is 23S rRNA (uracil(747)-C(5))-methyltransferase RlmC from Escherichia coli O17:K52:H18 (strain UMN026 / ExPEC).